The sequence spans 542 residues: Esterase 6 (542 aa).

The signal sequence occupies residues 1-19; the sequence is MNYVGLIIVLSCLWLGSNA. N-linked (GlcNAc...) asparagine glycosylation is present at asparagine 40. Residues cysteine 84 and cysteine 103 are joined by a disulfide bond. Serine 207 acts as the Acyl-ester intermediate in catalysis. A disulfide bridge connects residues cysteine 259 and cysteine 271. Asparagine 418 and asparagine 454 each carry an N-linked (GlcNAc...) asparagine glycan. The active-site Charge relay system is histidine 464. A disulfide bond links cysteine 512 and cysteine 533.

The protein belongs to the type-B carboxylesterase/lipase family. As to quaternary structure, monomer.

The protein localises to the secreted. The catalysed reaction is a carboxylic ester + H2O = an alcohol + a carboxylate + H(+). Its function is as follows. Transferred from the ejaculatory bulbs of males to the female genitals upon copulation, plays an important role in the reproductive biology. The polypeptide is Esterase 6 (Est-6) (Drosophila simulans (Fruit fly)).